We begin with the raw amino-acid sequence, 463 residues long: uncharacterized protein (463 aa).

This is an uncharacterized protein from Alkalihalophilus pseudofirmus (strain ATCC BAA-2126 / JCM 17055 / OF4) (Bacillus pseudofirmus).